The sequence spans 150 residues: General odorant-binding protein 19d (150 aa).

The first 23 residues, Met-1–Ala-23, serve as a signal peptide directing secretion. 3 disulfides stabilise this stretch: Cys-41–Cys-72, Cys-68–Cys-126, and Cys-116–Cys-135.

This sequence belongs to the PBP/GOBP family. In terms of tissue distribution, expressed in the antenna, mostly on the anterior surface of the third antennal segment. Also detected in the maxillary palps and in cells at the bases of the taste hairs on the proboscis and internal taste organs of the head.

It is found in the secreted. In Drosophila melanogaster (Fruit fly), this protein is General odorant-binding protein 19d (Obp19d).